Here is a 217-residue protein sequence, read N- to C-terminus: uncharacterized protein (217 aa).

Disordered regions lie at residues 1 to 85 (MGVK…RGNT) and 167 to 189 (KLRSPPHKDQHNSATNKDQEPDE). The segment covering 38–48 (AKSDKDKRKGS) has biased composition (basic and acidic residues). Low complexity predominate over residues 60–78 (NALPTKNLTTPPALNPLTT). The segment covering 172-189 (PHKDQHNSATNKDQEPDE) has biased composition (basic and acidic residues).

This is an uncharacterized protein from Saccharomyces cerevisiae (strain ATCC 204508 / S288c) (Baker's yeast).